Reading from the N-terminus, the 131-residue chain is Cuticle protein 79, isoform A (131 aa).

3 tandem repeats follow at residues 37-40 (AAPA), 45-48 (AAPA), and 53-56 (AAPA).

Functionally, component of the cuticle of migratory locust which contains more than 100 different structural proteins. This is Cuticle protein 79, isoform A from Locusta migratoria (Migratory locust).